A 358-amino-acid polypeptide reads, in one-letter code: MTGSFSVKLKSKKGQFIVKDLNQNTTLGELKTRIAQATAIQELQLHVLVGYPPKPLDLSENRENQNLKTVGINSGETLIVEEKAGAAGPTSTPLASGSGSSTMEDDEALARRLQAEEDAEHLRQVSSGGSIETGALNIVQSLEPVISPEESGPNGNFNGILLKKVVPADNSCLFTSIRFVLNGKVDNEGSEMMRHIIAQEVSADTQQYNDAVLGKSNSDYCAWIQKADSWGGAIEVSILSNYYGIEIDVVDIQNAIINRFGEDKNFGLRVFLLFDGIHYDPLYMETQQNSVPATIFPVEEMGVYQQAEQIANEAKSSRQFTNVDKFTLRCMDCDVMLVGQGQAQEHAKKTGHENFEEI.

Positions 5-87 (FSVKLKSKKG…LIVEEKAGAA (83 aa)) constitute a Ubiquitin-like domain. The segment at 8 to 94 (KLKSKKGQFI…GAAGPTSTPL (87 aa)) is UBX-like. The tract at residues 83-108 (KAGAAGPTSTPLASGSGSSTMEDDEA) is disordered. Residues 89-102 (PTSTPLASGSGSST) are compositionally biased toward polar residues. The 125-residue stretch at 161 to 285 (LLKKVVPADN…GIHYDPLYME (125 aa)) folds into the OTU domain. The tract at residues 166 to 172 (VPADNSC) is cys-loop. Asp169 is an active-site residue. Cys172 serves as the catalytic Nucleophile. The tract at residues 224 to 234 (IQKADSWGGAI) is variable-loop. The his-loop stretch occupies residues 274–278 (FDGIH). Residue Ile277 coordinates substrate. The active site involves His278. An S2 site region spans residues 301-306 (MGVYQQ). The segment at 328–352 (LRCMDCDVMLVGQGQAQEHAKKTGH) adopts a C2H2-type zinc-finger fold. His352 is an active-site residue.

It carries out the reaction Thiol-dependent hydrolysis of ester, thioester, amide, peptide and isopeptide bonds formed by the C-terminal Gly of ubiquitin (a 76-residue protein attached to proteins as an intracellular targeting signal).. In terms of biological role, hydrolase that can remove conjugated ubiquitin from proteins and may therefore play an important regulatory role at the level of protein turnover by preventing degradation. This is Ubiquitin thioesterase OTU1 from Drosophila pseudoobscura pseudoobscura (Fruit fly).